Here is a 398-residue protein sequence, read N- to C-terminus: Arginine biosynthesis bifunctional protein ArgJ (398 aa).

Residues T148, K174, T185, E271, N393, and T398 each coordinate substrate. T185 functions as the Nucleophile in the catalytic mechanism.

Belongs to the ArgJ family. Heterotetramer of two alpha and two beta chains.

It is found in the cytoplasm. It catalyses the reaction N(2)-acetyl-L-ornithine + L-glutamate = N-acetyl-L-glutamate + L-ornithine. It carries out the reaction L-glutamate + acetyl-CoA = N-acetyl-L-glutamate + CoA + H(+). Its pathway is amino-acid biosynthesis; L-arginine biosynthesis; L-ornithine and N-acetyl-L-glutamate from L-glutamate and N(2)-acetyl-L-ornithine (cyclic): step 1/1. It functions in the pathway amino-acid biosynthesis; L-arginine biosynthesis; N(2)-acetyl-L-ornithine from L-glutamate: step 1/4. In terms of biological role, catalyzes two activities which are involved in the cyclic version of arginine biosynthesis: the synthesis of N-acetylglutamate from glutamate and acetyl-CoA as the acetyl donor, and of ornithine by transacetylation between N(2)-acetylornithine and glutamate. The sequence is that of Arginine biosynthesis bifunctional protein ArgJ from Listeria monocytogenes serotype 4b (strain F2365).